A 272-amino-acid polypeptide reads, in one-letter code: MHLYKTSTPSTRNGAVDSQVKSNPRNNLIYGQHRCGKGRNARGIITAGHRGGGHKRLYRKIDFRRNEKNIYGRIVTIEYDPNRNAYICLIHYGDGEKRYILHPRGAIIGDTIVSGTEVPIKMGNALPLTDMPLGTAIHNIEITLGKGGQLARAAGAVAKLIAKEGKSATLKLPSGEVRLISKNCSATVGQVGNVGANQKSLGRAGSKCWLGKRPVVRGVVMNPVDHPHGGGEGRAPIGRKKPTTPWGYPALGRRSRKRNKYSDSLILRRRSK.

Residues 1–13 (MHLYKTSTPSTRN) show a composition bias toward polar residues. Disordered stretches follow at residues 1–27 (MHLYKTSTPSTRNGAVDSQVKSNPRNN) and 222–272 (NPVD…RRSK).

Belongs to the universal ribosomal protein uL2 family. As to quaternary structure, part of the 50S ribosomal subunit.

It is found in the plastid. The protein localises to the chloroplast. The protein is Large ribosomal subunit protein uL2cz/uL2cy (rpl2-A) of Buxus microphylla (Littleleaf boxwood).